The chain runs to 347 residues: NADH-ubiquinone oxidoreductase chain 2 (347 aa).

The next 10 membrane-spanning stretches (helical) occupy residues 13–33 (IVLGTMIVMTSSHWLMIWMGF), 59–79 (YFLTQATASMLLMLAIIINLV), 96–116 (IIMTVALAMKMGLAPFHFWVP), 122–142 (ISLLSGLILLTWQKLAPLSVL), 144–164 (VISPIINLDLLLTMSILSILI), 178–200 (ILAYSSIAHMGWMTSILIFNPMM), 210–232 (LMTATTFTLFMTTSTTTTLALSH), 246–266 (IIMLSLGGLPPLVGFLPKWMI), 276–296 (IILATLMAITALLNLFFYMRL), and 326–346 (LPMLIVLSTMTLPLAPAMILL).

The protein belongs to the complex I subunit 2 family. Core subunit of respiratory chain NADH dehydrogenase (Complex I) which is composed of 45 different subunits. Interacts with TMEM242.

It is found in the mitochondrion inner membrane. The enzyme catalyses a ubiquinone + NADH + 5 H(+)(in) = a ubiquinol + NAD(+) + 4 H(+)(out). Functionally, core subunit of the mitochondrial membrane respiratory chain NADH dehydrogenase (Complex I) which catalyzes electron transfer from NADH through the respiratory chain, using ubiquinone as an electron acceptor. Essential for the catalytic activity and assembly of complex I. This Rhynchonycteris naso (Brazilian long-nosed bat) protein is NADH-ubiquinone oxidoreductase chain 2.